Here is an 826-residue protein sequence, read N- to C-terminus: Disintegrin and metalloproteinase domain-containing protein 8 (826 aa).

An N-terminal signal peptide occupies residues M1–A16. Over P17–S658 the chain is Extracellular. Residues N89 and N260 are each glycosylated (N-linked (GlcNAc...) asparagine). Residues R196–P395 enclose the Peptidase M12B domain. 12 cysteine pairs are disulfide-bonded: C305–C390, C346–C374, C348–C357, C430–C452, C443–C449, C461–C481, C468–C498, C493–C503, C563–C615, C615–C625, C619–C631, and C633–C642. H329 serves as a coordination point for Zn(2+). Residue E330 is part of the active site. The Zn(2+) site is built by H333 and H339. Residues G403–N489 enclose the Disintegrin domain. N-linked (GlcNAc...) asparagine glycosylation is present at N431. The 33-residue stretch at R611 to V643 folds into the EGF-like domain. N-linked (GlcNAc...) asparagine glycosylation is present at N614. A helical membrane pass occupies residues L659–Y683. The Cytoplasmic segment spans residues R684–R826. Residues S701–R826 form a disordered region. Over residues P733–P748 the composition is skewed to pro residues. Over residues G749–P763 the composition is skewed to low complexity.

Interacts with FST3. Zn(2+) is required as a cofactor. As to expression, macrophages.

It is found in the membrane. Functionally, possible involvement in extravasation of leukocytes. This chain is Disintegrin and metalloproteinase domain-containing protein 8 (Adam8), found in Mus musculus (Mouse).